Here is a 181-residue protein sequence, read N- to C-terminus: Adenylyl-sulfate kinase (181 aa).

20–27 (GLSGAGKS) serves as a coordination point for ATP. Residue Ser94 is the Phosphoserine intermediate of the active site.

The protein belongs to the APS kinase family.

It catalyses the reaction adenosine 5'-phosphosulfate + ATP = 3'-phosphoadenylyl sulfate + ADP + H(+). It participates in sulfur metabolism; hydrogen sulfide biosynthesis; sulfite from sulfate: step 2/3. In terms of biological role, catalyzes the synthesis of activated sulfate. The sequence is that of Adenylyl-sulfate kinase from Deinococcus geothermalis (strain DSM 11300 / CIP 105573 / AG-3a).